The chain runs to 246 residues: Sensory transduction protein LytT (246 aa).

One can recognise a Response regulatory domain in the interval K3–K117. A 4-aspartylphosphate modification is found at D54. Positions L142 to I246 constitute an HTH LytTR-type domain.

Phosphorylated by LytS.

The protein localises to the cytoplasm. Its function is as follows. Member of the two-component regulatory system LytS/LytT that probably regulates genes involved in cell wall metabolism. This is Sensory transduction protein LytT (lytT) from Bacillus anthracis.